The primary structure comprises 510 residues: MDSKYIQKTLSAITEQITKNAAVQKVLDNKFVKEHKYAAAAATVGLGVVAATTIVKAVNCEGKRYNYDAIPNLSFDDESIYDVATIGAGPSGSVLGYYLAREGRKVALLEKKVFPRDKYCGDAVATMAQDILREMGVMKELVDEDLGHFAQNGGFVSPNGNSFIGNSAKELKRDAKYNRGAVIAVKRIVLDEKVAKAAKRMGADLKENTTVENATFDRSTGVWTINCVDSEDNTKKIVYRARVLVCADGSPSNAARQLGYVHTEPNGICSRAYVKNNTTFRYDGVVFYPPSLLPGYCAIIREARDELNYLAYIIPGGKVTNDDLSKYHHQYMTEDPFISAALGPNPDIERMKAAPLRLGGIKKSYDDHLLIVGDAAGFIDPLTGEGIQYAMEGSRLASLALIQAFNERDLSHQSLKRYQDFWMAKFGHEFSMSMTMSLFLYRFPIVLDAAASLIEKRGSRFLAEWAAVMTGVKPKTWFLRPDVGPLIVLEIFGECFRRVFQGKKQIKKLD.

The Cytoplasmic segment spans residues 1-36 (MDSKYIQKTLSAITEQITKNAAVQKVLDNKFVKEHK). The chain crosses the membrane as a helical span at residues 37–55 (YAAAAATVGLGVVAATTIV). Topologically, residues 56–510 (KAVNCEGKRY…QGKKQIKKLD (455 aa)) are extracellular.

The protein localises to the membrane. In terms of biological role, receptor for cmfA, that appears to mediate the G-independent cmfA signal transduction. This chain is Conditioned medium factor receptor 1 (cmfB), found in Dictyostelium discoideum (Social amoeba).